Reading from the N-terminus, the 98-residue chain is Molybdopterin synthase sulfur carrier subunit (98 aa).

Gly98 carries the 1-thioglycine; alternate modification. Gly98 bears the Glycyl adenylate; alternate mark.

It belongs to the MoaD family. MOCS2A subfamily. As to quaternary structure, heterotetramer; composed of 2 small (MOCS2A) and 2 large (MOCS2B) subunits. Post-translationally, C-terminal thiocarboxylation occurs in 2 steps, it is first acyl-adenylated (-COAMP) via the hesA/moeB/thiF part of MOCS3, then thiocarboxylated (-COSH) via the rhodanese domain of MOCS3.

The protein localises to the cytoplasm. It functions in the pathway cofactor biosynthesis; molybdopterin biosynthesis. Functionally, acts as a sulfur carrier required for molybdopterin biosynthesis. Component of the molybdopterin synthase complex that catalyzes the conversion of precursor Z into molybdopterin by mediating the incorporation of 2 sulfur atoms into precursor Z to generate a dithiolene group. In the complex, serves as sulfur donor by being thiocarboxylated (-COSH) at its C-terminus by MOCS3. After interaction with MOCS2B, the sulfur is then transferred to precursor Z to form molybdopterin. The sequence is that of Molybdopterin synthase sulfur carrier subunit from Aedes aegypti (Yellowfever mosquito).